We begin with the raw amino-acid sequence, 233 residues long: Ras-related protein RABA6a (233 aa).

20-27 (GDSAVGKS) is a binding site for GTP. The Effector region motif lies at 42–50 (SKPTIGVEF). GTP-binding positions include 68-72 (DTAGQ), 126-129 (NKSD), and 156-157 (SA). Residues Cys-230 and Cys-231 are each lipidated (S-geranylgeranyl cysteine).

This sequence belongs to the small GTPase superfamily. Rab family.

Its subcellular location is the cell membrane. In terms of biological role, intracellular vesicle trafficking and protein transport. The protein is Ras-related protein RABA6a (RABA6A) of Arabidopsis thaliana (Mouse-ear cress).